The chain runs to 129 residues: Histone H2A-III (129 aa).

A disordered region spans residues 1–22 (MSGRGKQGGKARAKAKSRSSRA). Serine 2 bears the N-acetylserine mark. Serine 2 carries the phosphoserine modification. Lysine 6 carries the post-translational modification N6-(2-hydroxyisobutyryl)lysine. An N6-acetyllysine mark is found at lysine 6 and lysine 10. Residues 7-19 (QGGKARAKAKSRS) are compositionally biased toward basic residues. An N6-(2-hydroxyisobutyryl)lysine; alternate modification is found at lysine 10. An N6-lactoyllysine; alternate modification is found at lysine 10. Lysine 10 carries the post-translational modification N6-succinyllysine. Residues lysine 14 and lysine 16 each participate in a glycyl lysine isopeptide (Lys-Gly) (interchain with G-Cter in ubiquitin) cross-link. Lysine 37 carries the N6-(2-hydroxyisobutyryl)lysine; alternate modification. An N6-(2-hydroxyisobutyryl)lysine mark is found at lysine 75 and lysine 76. N6-(2-hydroxyisobutyryl)lysine; alternate is present on lysine 96. Lysine 96 carries the post-translational modification N6-succinyllysine. Lysine 96 carries the N6-glutaryllysine; alternate modification. Lysine 100 is modified (N6-glutaryllysine). An N5-methylglutamine modification is found at glutamine 105. Lysine 119 is modified (N6-(2-hydroxyisobutyryl)lysine; alternate). Residues lysine 119 and lysine 120 each carry the N6-glutaryllysine; alternate modification. Lysine 120 participates in a covalent cross-link: Glycyl lysine isopeptide (Lys-Gly) (interchain with G-Cter in ubiquitin).

Belongs to the histone H2A family. The nucleosome is a histone octamer containing two molecules each of H2A, H2B, H3 and H4 assembled in one H3-H4 heterotetramer and two H2A-H2B heterodimers. The octamer wraps approximately 147 bp of DNA. Monoubiquitination of Lys-120 (H2AK119Ub) gives a specific tag for epigenetic transcriptional repression. Following DNA double-strand breaks (DSBs), it is ubiquitinated through 'Lys-63' linkage of ubiquitin moieties, leading to the recruitment of repair proteins to sites of DNA damage. H2AK119Ub and ionizing radiation-induced 'Lys-63'-linked ubiquitination are distinct events. In terms of processing, phosphorylation on Ser-2 is enhanced during mitosis. Phosphorylation on Ser-2 directly represses transcription. Post-translationally, glutamine methylation at Gln-105 (H2AQ104me) by FBL is specifically dedicated to polymerase I. It is present at 35S ribosomal DNA locus and impairs binding of the FACT complex.

The protein localises to the nucleus. It localises to the chromosome. Its function is as follows. Core component of nucleosome. Nucleosomes wrap and compact DNA into chromatin, limiting DNA accessibility to the cellular machineries which require DNA as a template. Histones thereby play a central role in transcription regulation, DNA repair, DNA replication and chromosomal stability. DNA accessibility is regulated via a complex set of post-translational modifications of histones, also called histone code, and nucleosome remodeling. This is Histone H2A-III from Gallus gallus (Chicken).